Here is a 557-residue protein sequence, read N- to C-terminus: Dihydroxy-acid dehydratase (557 aa).

C50 is a [2Fe-2S] cluster binding site. D82 provides a ligand contact to Mg(2+). C123 is a [2Fe-2S] cluster binding site. Residues D124 and K125 each coordinate Mg(2+). An N6-carboxylysine modification is found at K125. Residue C195 coordinates [2Fe-2S] cluster. E447 provides a ligand contact to Mg(2+). The active-site Proton acceptor is S473.

The protein belongs to the IlvD/Edd family. In terms of assembly, homodimer. [2Fe-2S] cluster serves as cofactor. It depends on Mg(2+) as a cofactor.

It carries out the reaction (2R)-2,3-dihydroxy-3-methylbutanoate = 3-methyl-2-oxobutanoate + H2O. The catalysed reaction is (2R,3R)-2,3-dihydroxy-3-methylpentanoate = (S)-3-methyl-2-oxopentanoate + H2O. Its pathway is amino-acid biosynthesis; L-isoleucine biosynthesis; L-isoleucine from 2-oxobutanoate: step 3/4. The protein operates within amino-acid biosynthesis; L-valine biosynthesis; L-valine from pyruvate: step 3/4. Functionally, functions in the biosynthesis of branched-chain amino acids. Catalyzes the dehydration of (2R,3R)-2,3-dihydroxy-3-methylpentanoate (2,3-dihydroxy-3-methylvalerate) into 2-oxo-3-methylpentanoate (2-oxo-3-methylvalerate) and of (2R)-2,3-dihydroxy-3-methylbutanoate (2,3-dihydroxyisovalerate) into 2-oxo-3-methylbutanoate (2-oxoisovalerate), the penultimate precursor to L-isoleucine and L-valine, respectively. This Ralstonia nicotianae (strain ATCC BAA-1114 / GMI1000) (Ralstonia solanacearum) protein is Dihydroxy-acid dehydratase.